Here is a 498-residue protein sequence, read N- to C-terminus: ATP synthase subunit beta, chloroplastic (498 aa).

ATP is bound at residue 172-179 (GGAGVGKT).

Belongs to the ATPase alpha/beta chains family. F-type ATPases have 2 components, CF(1) - the catalytic core - and CF(0) - the membrane proton channel. CF(1) has five subunits: alpha(3), beta(3), gamma(1), delta(1), epsilon(1). CF(0) has four main subunits: a(1), b(1), b'(1) and c(9-12).

Its subcellular location is the plastid. The protein resides in the chloroplast thylakoid membrane. It catalyses the reaction ATP + H2O + 4 H(+)(in) = ADP + phosphate + 5 H(+)(out). Produces ATP from ADP in the presence of a proton gradient across the membrane. The catalytic sites are hosted primarily by the beta subunits. The sequence is that of ATP synthase subunit beta, chloroplastic from Hyphaene coriacea (Ilala palm).